The chain runs to 445 residues: Succinate--CoA ligase [ADP-forming] subunit beta, mitochondrial (445 aa).

Residues 1 to 17 (MLSNIVKKTIQSSKNLK) constitute a mitochondrion transit peptide. Positions 43 to 270 (QKMMKSYGIN…DNAAFRHPDI (228 aa)) constitute an ATP-grasp domain. ATP-binding positions include K80 and 87-89 (GRG). Mg(2+)-binding residues include N240 and D254. Substrate contacts are provided by residues N305 and 362-364 (GIM).

This sequence belongs to the succinate/malate CoA ligase beta subunit family. ATP-specific subunit beta subfamily. As to quaternary structure, heterodimer of an alpha and a beta subunit. The beta subunit determines specificity for ATP. Requires Mg(2+) as cofactor.

It localises to the mitochondrion. It catalyses the reaction succinate + ATP + CoA = succinyl-CoA + ADP + phosphate. Its pathway is carbohydrate metabolism; tricarboxylic acid cycle; succinate from succinyl-CoA (ligase route): step 1/1. Its function is as follows. ATP-specific succinyl-CoA synthetase functions in the citric acid cycle (TCA), coupling the hydrolysis of succinyl-CoA to the synthesis of ATP and thus represents the only step of substrate-level phosphorylation in the TCA. The beta subunit provides nucleotide specificity of the enzyme and binds the substrate succinate, while the binding sites for coenzyme A and phosphate are found in the alpha subunit. The chain is Succinate--CoA ligase [ADP-forming] subunit beta, mitochondrial (scsC) from Dictyostelium discoideum (Social amoeba).